We begin with the raw amino-acid sequence, 566 residues long: MTLLENDAATDPVYTVGDYLLDRLAELGVSEIFGVPGDYNLEFLDHIVAHPIIRWVGSANELNAGYAADGYGRLRGMSAVVTTFGVGELSATNAIAGSYAEHVPVVHIVGGPSKDAQGARRALHHSLGDGDFEHFFRISREITCAQANLMPATACREIDRVICEVREQKRPGYLLLSTDVARFPTEPPGAPLPPLAGGTSPRALSLFTRAAADLIGDHQLTVLADLLVHRLQAIKELEALLSADVVPHATLMWGKSLLDESSANFLGIYAGAASAEPVRKAIEQAPVLVTAGVVFTDMVSGFFSQRIDPARTIDIGQYQSSVADQVFAPLEMGAALQAVATILTKRGISSPPVAVPPAEPGPPTPRRDEPLNQEMLWNRLCEALTPGNVVLADQGTSFYGMADHRLPQGVTFIGQPLWGSIGYTLPAALGAAVAHPDRRTVLLIGDGAAQLTVQELGIFSREGLSPVIVVVNNDGYTVERAIHGETATYNDIVSWRWTDVPGALGVTNHLAMRAENYGELDDALTAAAEQQDRMVVVEAVLPRLDVPPLLDELVGSLSPPECGGRS.

Glutamate 61 contacts thiamine diphosphate. The segment at 396–478 (TSFYGMADHR…VVVNNDGYTV (83 aa)) is thiamine pyrophosphate binding. Mg(2+)-binding residues include aspartate 446, asparagine 473, and glycine 475.

This sequence belongs to the TPP enzyme family. The cofactor is a metal cation. Requires thiamine diphosphate as cofactor.

In terms of biological role, decarboxylates branched-chain and aromatic alpha-keto acids to aldehydes. This chain is Alpha-keto-acid decarboxylase (kdc), found in Mycobacterium ulcerans (strain Agy99).